The primary structure comprises 392 residues: MMEDDGQPRTLYVGNLSRDVTEVLILQLFSQIGPCKSCKMITEQPDSRRVNSSVGFSVLQHTSNDPYCFVEFYEHRDAAAALAAMNGRKILGKEVKVNWATTPSSQKKDTSNHFHVFVGDLSPEITTEDIKSAFAPFGKISDARVVKDMATGKSKGYGFVSFYNKLDAENAIVHMGGQWLGGRQIRTNWATRKPPAPKSTQETNTKQLRFEDVVNQSSPKNCTVYCGGIASGLTDQLMRQTFSPFGQIMEIRVFPEKGYSFVRFSTHESAAHAIVSVNGTTIEGHVVKCYWGKESPDMTKNFQQVDYSQWGQWSQVYGNPQQYGQYMANGWQVPPYGVYGQPWNQQGFGVDQSPSAAWMGGFGAQPPQGQAPPPVIPPPNQAGYGMASFPTQ.

RRM domains follow at residues 9-102 and 114-192; these read RTLY…WATT and FHVF…WATR. Lys139 carries the post-translational modification N6-acetyllysine. Ser218 is modified (phosphoserine). The RRM 3 domain occupies 222 to 294; sequence CTVYCGGIAS…HVVKCYWGKE (73 aa). The segment at 363–392 is disordered; that stretch reads GAQPPQGQAPPPVIPPPNQAGYGMASFPTQ. Over residues 369–380 the composition is skewed to pro residues; that stretch reads GQAPPPVIPPPN.

Interacts with FASTK. Post-translationally, phosphorylated by MAPK14 following DNA damage, releasing TIAR from GADD45A mRNA. Expressed both in primordial germ cells (PGCs) and in neighboring somatic cells.

It is found in the nucleus. It localises to the cytoplasm. The protein resides in the stress granule. The protein localises to the cytolytic granule. In terms of biological role, RNA-binding protein involved in alternative pre-RNA splicing and in cytoplasmic stress granules formation. Shows a preference for uridine-rich RNAs. Activates splicing of alternative exons with weak 5' splice sites followed by a U-rich stretch on its own pre-mRNA and on TIA1 mRNA. Promotes the inclusion of TIA1 exon 5 to give rise to the long isoform (isoform a) of TIA1. Acts downstream of the stress-induced phosphorylation of EIF2S1/EIF2A to promote the recruitment of untranslated mRNAs to cytoplasmic stress granules (SG). Possesses nucleolytic activity against cytotoxic lymphocyte target cells. May be involved in apoptosis. The chain is Nucleolysin TIAR (Tial1) from Mus musculus (Mouse).